A 285-amino-acid chain; its full sequence is (3S)-malyl-CoA thioesterase (285 aa).

Residues Arg70 and Glu122 each contribute to the substrate site. Residues Glu122 and Asp148 each contribute to the Mg(2+) site.

It belongs to the HpcH/HpaI aldolase family. As to quaternary structure, homodimer or homotrimer. Requires Mg(2+) as cofactor.

It catalyses the reaction (S)-malyl-CoA + H2O = (S)-malate + CoA + H(+). Its activity is regulated as follows. Reversibly inhibited by EDTA. Stimulated by the divalent cations Mg(2+) and Mn(2+). Its function is as follows. Catalyzes the hydrolysis of (3S)-malyl-CoA to (3S)-malate and free CoA. Inactive towards beta-methylmalyl-CoA and other CoA esters. The polypeptide is (3S)-malyl-CoA thioesterase (Cereibacter sphaeroides (strain ATCC 17023 / DSM 158 / JCM 6121 / CCUG 31486 / LMG 2827 / NBRC 12203 / NCIMB 8253 / ATH 2.4.1.) (Rhodobacter sphaeroides)).